The sequence spans 396 residues: S-adenosylmethionine synthase (396 aa).

Residue H15 participates in ATP binding. Position 17 (D17) interacts with Mg(2+). Position 43 (E43) interacts with K(+). L-methionine-binding residues include E56 and Q99. The tract at residues Q99–R109 is flexible loop. Residues D175–K177, R241–F242, D250, R256–K257, A273, and K277 each bind ATP. D250 provides a ligand contact to L-methionine. Residue K281 participates in L-methionine binding.

Belongs to the AdoMet synthase family. In terms of assembly, homotetramer; dimer of dimers. The cofactor is Mg(2+). K(+) serves as cofactor.

It is found in the cytoplasm. The enzyme catalyses L-methionine + ATP + H2O = S-adenosyl-L-methionine + phosphate + diphosphate. It participates in amino-acid biosynthesis; S-adenosyl-L-methionine biosynthesis; S-adenosyl-L-methionine from L-methionine: step 1/1. Its function is as follows. Catalyzes the formation of S-adenosylmethionine (AdoMet) from methionine and ATP. The overall synthetic reaction is composed of two sequential steps, AdoMet formation and the subsequent tripolyphosphate hydrolysis which occurs prior to release of AdoMet from the enzyme. The polypeptide is S-adenosylmethionine synthase (Carboxydothermus hydrogenoformans (strain ATCC BAA-161 / DSM 6008 / Z-2901)).